The following is a 315-amino-acid chain: Thioredoxin reductase (315 aa).

An FAD-binding site is contributed by 34 to 41 (EGMKVGGQ). The cysteines at positions 134 and 137 are disulfide-linked. Position 282-291 (282-291 (DIRVKSLRQV)) interacts with FAD.

Belongs to the class-II pyridine nucleotide-disulfide oxidoreductase family. In terms of assembly, homodimer. The cofactor is FAD.

Its subcellular location is the cytoplasm. It catalyses the reaction [thioredoxin]-dithiol + NADP(+) = [thioredoxin]-disulfide + NADPH + H(+). This is Thioredoxin reductase (trxB) from Peptoclostridium litorale (Clostridium litorale).